A 336-amino-acid chain; its full sequence is Glyceraldehyde-3-phosphate dehydrogenase 1 (336 aa).

NAD(+) is bound by residues 12-13, D34, and R79; that span reads RI. Residues 149 to 151, T180, 209 to 210, and R232 each bind D-glyceraldehyde 3-phosphate; these read SCT and TG. C150 (nucleophile) is an active-site residue. N314 contacts NAD(+).

This sequence belongs to the glyceraldehyde-3-phosphate dehydrogenase family. As to quaternary structure, homotetramer.

It is found in the cytoplasm. The enzyme catalyses D-glyceraldehyde 3-phosphate + phosphate + NAD(+) = (2R)-3-phospho-glyceroyl phosphate + NADH + H(+). The protein operates within carbohydrate degradation; glycolysis; pyruvate from D-glyceraldehyde 3-phosphate: step 1/5. Inhibited by koningic acid through the interaction of cysteine residues with koningic acid even at very low concentrations. This chain is Glyceraldehyde-3-phosphate dehydrogenase 1 (gpd1), found in Trichoderma koningii (Hypocrea koningii).